The following is a 1589-amino-acid chain: Centrosomal protein of 170 kDa protein B (1589 aa).

The region spanning 23 to 73 (IFVGREECELMLQSRSVDKQHAVINYDQDRDEHWVKDLGSLNGTFVNDMRI) is the FHA domain. Disordered regions lie at residues 130-261 (RSEA…GAAP), 287-309 (ITKFSLRQRRPPGKEATPGEMVS), 325-388 (LLHR…RLQR), and 409-583 (FDED…EVEE). 2 stretches are compositionally biased toward basic and acidic residues: residues 147–156 (RPEKGDRRPG) and 243–253 (PAHEMPTKDAE). Positions 330–344 (GPGDDRHSTKSDLPV) are enriched in basic and acidic residues. S360 and S421 each carry phosphoserine. Composition is skewed to basic and acidic residues over residues 430 to 446 (PKADKRRGPTPADRDRP) and 467 to 476 (LKREKTEERL). Residues 478–489 (SPSPASRTPARP) are compositionally biased toward low complexity. Phosphoserine is present on residues S480 and S492. The span at 520-530 (EKVPPVLPAPL) shows a compositional bias: pro residues. S536 carries the post-translational modification Phosphoserine. The span at 538 to 548 (VGPPTPPPAPT) shows a compositional bias: pro residues. T542 carries the post-translational modification Phosphothreonine. S597, S619, S655, S711, S721, S746, S748, S751, S753, S772, S829, S853, S954, S972, S986, and S988 each carry phosphoserine. Disordered stretches follow at residues 598-895 (PELS…LQDL), 934-1316 (DAEC…PYGF), 1350-1374 (DGDTLGSSEPAHSASLSNMPSTPAS), and 1532-1552 (AQPGLGKGRVAAQSPPSPASA). Over residues 711–722 (SPAGPESSRRSG) the composition is skewed to low complexity. Residues 957-972 (DTASTVSLRSGKSGPS) show a composition bias toward polar residues. The span at 1029-1038 (SAIRRGHRPR) shows a compositional bias: basic residues. Residues S1135, S1179, and S1199 each carry the phosphoserine modification. The span at 1221–1230 (AANTATTTGP) shows a compositional bias: polar residues. Over residues 1286–1301 (PRAGSSSRARSRAPGP) the composition is skewed to low complexity. T1304 is subject to Phosphothreonine. Phosphoserine occurs at positions 1356 and 1362. Polar residues predominate over residues 1363–1374 (ASLSNMPSTPAS). The segment covering 1542-1552 (AAQSPPSPASA) has biased composition (low complexity). Phosphoserine is present on residues S1545 and S1548.

It belongs to the CEP170 family.

The protein localises to the cytoplasm. It is found in the cytoskeleton. Functionally, plays a role in microtubule organization. This Homo sapiens (Human) protein is Centrosomal protein of 170 kDa protein B (CEP170B).